The following is a 758-amino-acid chain: 3-isopropylmalate dehydratase (758 aa).

[4Fe-4S] cluster-binding residues include Cys-359, Cys-420, and Cys-423. 2 positions are modified to phosphoserine: Ser-486 and Ser-488.

Belongs to the aconitase/IPM isomerase family. [4Fe-4S] cluster is required as a cofactor.

It catalyses the reaction (2R,3S)-3-isopropylmalate = (2S)-2-isopropylmalate. Its pathway is amino-acid biosynthesis; L-leucine biosynthesis; L-leucine from 3-methyl-2-oxobutanoate: step 2/4. In terms of biological role, catalyzes the isomerization between 2-isopropylmalate and 3-isopropylmalate, via the formation of 2-isopropylmaleate. The chain is 3-isopropylmalate dehydratase (leu2) from Schizosaccharomyces pombe (strain 972 / ATCC 24843) (Fission yeast).